A 99-amino-acid polypeptide reads, in one-letter code: Ferredoxin, heterocyst (99 aa).

Residues 4–96 (YQVRLINKKE…NCTIKTHQEP (93 aa)) form the 2Fe-2S ferredoxin-type domain. [2Fe-2S] cluster-binding residues include C42, C47, C50, and C80.

It belongs to the 2Fe2S plant-type ferredoxin family. It depends on [2Fe-2S] cluster as a cofactor.

Functionally, ferredoxins are iron-sulfur proteins that transfer electrons in a wide variety of metabolic reactions. This Microchaete diplosiphon (Fremyella diplosiphon) protein is Ferredoxin, heterocyst (fdxH).